The sequence spans 306 residues: Methionyl-tRNA formyltransferase (306 aa).

109 to 112 (SILP) contacts (6S)-5,6,7,8-tetrahydrofolate.

This sequence belongs to the Fmt family.

It carries out the reaction L-methionyl-tRNA(fMet) + (6R)-10-formyltetrahydrofolate = N-formyl-L-methionyl-tRNA(fMet) + (6S)-5,6,7,8-tetrahydrofolate + H(+). Functionally, attaches a formyl group to the free amino group of methionyl-tRNA(fMet). The formyl group appears to play a dual role in the initiator identity of N-formylmethionyl-tRNA by promoting its recognition by IF2 and preventing the misappropriation of this tRNA by the elongation apparatus. This chain is Methionyl-tRNA formyltransferase, found in Sphingopyxis alaskensis (strain DSM 13593 / LMG 18877 / RB2256) (Sphingomonas alaskensis).